The chain runs to 507 residues: Natural resistance-associated macrophage protein 1 (507 aa).

Residues 1 to 36 (MIRDKNPQRVNRPSYGSISSLPSPAPQPEPSRNTYL) form a disordered region. Topologically, residues 1-39 (MIRDKNPQRVNRPSYGSISSLPSPAPQPEPSRNTYLSEK) are cytoplasmic. A compositionally biased stretch (polar residues) spans 8–22 (QRVNRPSYGSISSLP). Residues 40-60 (IPIPSTEQLLWVLLWATVLGL) traverse the membrane as a helical segment. The Extracellular segment spans residues 61 to 123 (LCQRLAARLG…ISFNLLSAGR (63 aa)). The helical transmembrane segment at 124–144 (IPLWGGVLITIVDTFFFLFLD) threads the bilayer. Over 145-152 (NYGLRKLE) the chain is Cytoplasmic. The helical transmembrane segment at 153 to 173 (AFFGFLVTIMALTFGYEYVVA) threads the bilayer. The Extracellular portion of the chain corresponds to 174-199 (RPSQGALLKGLFLPSCPGCGQPELLQ). A helical transmembrane segment spans residues 200-220 (AVGIVGAIIMPHNIYLHSALV). At 221–245 (KSREVDRTRRGDVREANMYFLTEAT) the chain is on the cytoplasmic side. The chain crosses the membrane as a helical span at residues 246–266 (IALFVSFIINLFVMAVFGQAF). Over 267 to 305 (YQQTNEEAFNICANSSLHNYAKIFPRDNNTVSVDIYQGG) the chain is Extracellular. N-linked (GlcNAc...) asparagine glycans are attached at residues Asn-280 and Asn-294. The chain crosses the membrane as a helical span at residues 306–326 (VILGCLFGPAALYIWAVGLLA). Over 327–353 (AGQSSTMTGTYAGQFVMEGFLKLRWSR) the chain is Cytoplasmic. A helical membrane pass occupies residues 354-374 (FARVLLTRSCAILPTVLVAVF). The Extracellular portion of the chain corresponds to 375–391 (RDLRDLSGLNDLLNVLQ). A helical transmembrane segment spans residues 392–412 (SLLLPFAVLPILTFTSMPAVM). The Cytoplasmic segment spans residues 413-422 (QEFANGWLSK). The helical transmembrane segment at 423–443 (VITSCIMALVCAINLYFVISY) threads the bilayer. Over 444-451 (LPSLPHPA) the chain is Extracellular. The chain crosses the membrane as a helical span at residues 452–472 (YFGLVALLAIGYLGLTAYLAW). At 473 to 507 (TCCIAHGAKFLTHSSHQRFLYGLPIEEQEGREGSG) the chain is on the cytoplasmic side.

Belongs to the NRAMP family.

The protein localises to the late endosome membrane. It is found in the lysosome membrane. It catalyses the reaction Zn(2+)(in) + H(+)(out) = Zn(2+)(out) + H(+)(in). The catalysed reaction is Fe(2+)(in) + H(+)(out) = Fe(2+)(out) + H(+)(in). The enzyme catalyses Mn(2+)(in) + H(+)(out) = Mn(2+)(out) + H(+)(in). Functionally, macrophage-specific antiporter that fluxes metal ions in either direction against a proton gradient. Localized to late endosomal lysosomal membranes, delivers bivalent cations from the cytosol into these acidic compartments where they may directly affect antimicrobial activity. Involved in iron metabolism and host natural resistance to infection with intracellular parasites. Pathogen resistance involves sequestration of Fe(2+) and Mn(2+), cofactors of both prokaryotic and eukaryotic catalases and superoxide dismutases, not only to protect the macrophage against its own generation of reactive oxygen species, but to deny the cations to the pathogen for synthesis of its protective enzymes. This is Natural resistance-associated macrophage protein 1 (Slc11a1) from Rattus norvegicus (Rat).